The sequence spans 226 residues: UPF0758 protein SGO_1229 (226 aa).

The MPN domain occupies 103-225 (RILSSQKLAK…YYSYREETDL (123 aa)). Residues H174, H176, and D187 each contribute to the Zn(2+) site. The short motif at 174–187 (HNHPSGATRPSRDD) is the JAMM motif element.

This sequence belongs to the UPF0758 family.

In Streptococcus gordonii (strain Challis / ATCC 35105 / BCRC 15272 / CH1 / DL1 / V288), this protein is UPF0758 protein SGO_1229.